The primary structure comprises 115 residues: SOSS complex subunit C homolog (115 aa).

The protein belongs to the SOSS-C family.

This Drosophila grimshawi (Hawaiian fruit fly) protein is SOSS complex subunit C homolog.